Consider the following 163-residue polypeptide: Large ribosomal subunit protein uL10 (163 aa).

It belongs to the universal ribosomal protein uL10 family. As to quaternary structure, part of the ribosomal stalk of the 50S ribosomal subunit. The N-terminus interacts with L11 and the large rRNA to form the base of the stalk. The C-terminus forms an elongated spine to which L12 dimers bind in a sequential fashion forming a multimeric L10(L12)X complex.

Functionally, forms part of the ribosomal stalk, playing a central role in the interaction of the ribosome with GTP-bound translation factors. This Actinobacillus pleuropneumoniae serotype 5b (strain L20) protein is Large ribosomal subunit protein uL10.